A 243-amino-acid polypeptide reads, in one-letter code: Carboxy-S-adenosyl-L-methionine synthase (243 aa).

Residues Y40, 65–67 (GCS), 90–91 (DN), 118–119 (DI), N133, and R200 each bind S-adenosyl-L-methionine.

It belongs to the class I-like SAM-binding methyltransferase superfamily. Cx-SAM synthase family. As to quaternary structure, homodimer.

It carries out the reaction prephenate + S-adenosyl-L-methionine = carboxy-S-adenosyl-L-methionine + 3-phenylpyruvate + H2O. In terms of biological role, catalyzes the conversion of S-adenosyl-L-methionine (SAM) to carboxy-S-adenosyl-L-methionine (Cx-SAM). The chain is Carboxy-S-adenosyl-L-methionine synthase from Shewanella sediminis (strain HAW-EB3).